We begin with the raw amino-acid sequence, 750 residues long: MFIGKKAPAALRKQLWPVFPTYNILGSRNIYVMSHERRKKAAKRKSDKLQQWAEQEEMRLAREKNQQYAKKLKELKQLTRSVASYVRTREARELEAQKIQELSLPSELGKGSEPAGLAAPRSAKIAPFDASAASLSTSAVPLPQSIQDRLGLAVKYLVSKDHQNWSIVLQQLEAAGGFDGLPQKDIRKMVYAIPKDQLRHVFPQIESLLGQAGLAVSPKLLNTYIKSLMLGRTLNDAQIAYIEGIVAKLRQEPGKEGKLGKLSRATYELLIEAYGKNTNVAKMNEVIQEMKELGLQLSPVVYTNVLSTCVYKTRDHQQAVKLFDSMKFLAGSMAPQTREYQDIIVSYVNNDDIEKALDLYQEMLDQKLDFNQNIMVALARGCMSREQLRFKAWDFIFEIYRCGWEPTANTLEYMLYLASKDGDLALARALYQQLNISNALSPRAFSFLFLAYARSNVGKSIEEFQPFAITVHEEGRNFRRNILEKVDLTPTTENPKQAVPYLPKISLSTPQEVLAESSAVMAHALMVNREFVNVESVTTFLNVAARMGSLDDFIDRYEEFTFLDKTGVTETKTVIEPEILESTSVLLAPKEPSPTKSPILAQVTESQKSAFKMPRNTITYLIALKAAAKHKNYIFAQKVWTERGTYRKSAGFRNLPKSEKEKLDFSFASGMVNCLTDMKLLDDALAILVSTEYQFKWTWKELSHLYAAAAEAGYDKVTKTIRGVVKRAQINFEGKIRRKDYKKYVMERGY.

A mitochondrion-targeting transit peptide spans 1 to 82 (MFIGKKAPAA…KELKQLTRSV (82 aa)). PPR repeat units follow at residues 263–297 (SRAT…GLQL), 298–333 (SPVV…AGSM), 336–370 (QTRE…KLDF), and 371–406 (NQNI…GWEP).

The protein belongs to the CCM1 family. In terms of assembly, binds to mitochondrial small subunit 15S rRNA.

The protein resides in the mitochondrion. Regulates mitochondrial small subunit maturation by controlling 15S rRNA 5'-end processing. Localizes to the 5' precursor of the 15S rRNA in a position that is subsequently occupied by mS47 in the mature yeast mtSSU. Uses structure and sequence-specific RNA recognition, binding to a single-stranded region of the precursor and specifically recognizing bases -6 to -1. The exchange of Ccm1 for mS47 is coupled to the irreversible removal of precursor rRNA that is accompanied by conformational changes of the mitoribosomal proteins uS5m and mS26. These conformational changes signal completion of 5'-end rRNA processing through protection of the mature 5'-end of the 15S rRNA and stabilization of mS47. The removal of the 5' precursor together with the dissociation of Ccm1 may be catalyzed by the 5'-3' exoribonuclease Pet127. Involved in the specific removal of group I introns in mitochondrial encoded transcripts. This is Mitochondrial 15S rRNA processing factor CCM1 (CCM1) from Clavispora lusitaniae (strain ATCC 42720) (Yeast).